Here is a 3097-residue protein sequence, read N- to C-terminus: MAARRCLNQLRQRYITNRFNICTCAIFLISLPFILAIEETTFAGLSAENAARMLAGSPGDVEKSSLSHHSEMSLVLPHDTYPGFSIKKFKTHPVKINGSSHSGAAAYHMLDTDYSKYFTVLEDGVVMTTADISPLVNRPVQLVVVEQTPNATNTHNLQLFVMHRNDMLRFSGSLLDASGEVRENQPAGTRVRGVPLMQAFSGSILDEELATPKKVRYTIIDGNVDDAFALQERKANKNIQISAKSLVINGDDESGVWLVTNRPLDREERAHYDLSVEASDVDGLDRTVSKIQITVLDENDNRPIFKSLDYKFAIAGQKSASMESNSSVTYQRFAIMGKVEATDADGDKIAYRLKSPSNVVIIVPQTGEIMLAGEPTSNELLIEVIAHDLRYPSLVSAKPAKVLLEFLAAEPVSFIMQHLEHDDINNHSHHREKRRVTRAVRPTKRIEFTEADGDTEGKSVFQLEKETDKETFKIRDDNPWVTVETNGAVRVKKKWDYEELGPEKTIDFWVIITNMGHNAGIKYTDNQRVIILVKDVNDEPPYFINRPLPMQAVVQLNAPPNTPVFTLQARDPDTDHNIHYFIVRDRTGGRFEVDERSGVVRTRGTDLFQLDMEYVLYVKAEDQNGKVDDRRFQSTPEERLSIVGGKRAPQFYMPSYEAEIPENQKKDSDIISIKAKSFADREIRYTLKAQGQGAGTFNIGPTSGIVKLAKELDFEDLRQPHVYSLIVTATEDSGGFSTSVDLTIRVTDVNDNAPKFELPDYQAHNVDEDIPLGTSILRVKAMDSDSGSNAEIEYLVSDDHFAVDSNGIIVNNKQLDADNNNAYYEFIVTAKDKGEPPKSGVATVRVYTKNKNDEEPKFSQQVYTPNVDENAGPNTLVTTVVASDKDGDNVRFGFVGGGTSSGQFVIEDITGVIRLHNKAISLDKDKYELNVTAMDDGSCCVNGDQTIHTSTAVVVVFITDVNDNKPVFKDCSTYYPKVEEGAPNGSPVIKVVATDEDKGVNGQVKYSIVQQPNQKGTKFTVDEETGEVSTNKVFDREGDDGKFVSVTVKATDQGDPSLEGVCSFTVEITDVNDNPPLFDRQKYVENVKQDASIGTNILRVSASDEDADNNGAIVYSLTAPFNPNDLEYFEIQAESGWIVLKKPLDRETYKLEAMAQDKGYPPLSRTVEVQIDVVDRANNPPVWDHTVYGPIYVKENMPVGGKVVSIKASSGIEGNPTVFYRLMPGSTAQTNKFHTFYLQQRPDNGDTWADIKVNHPLDYESIKEYNLTIRVENNGAQQLASEATVYIMLEDVNDEIPLFTEREQETVLEGEPIGTKVTQVNAIDKDGTFPNNQVYYYIVDSPRNEGKEFFEINLQSGEIFTKTVFDREKKGAYALEVEARDGAPSARPNSNGPNSVTKFIRIGIADKNDNPPYFDKSLYEAEVDENEDIQHTVLTVTAKDHDESSRIRYEITSGNIGGAFAVKNMTGAIYVAGALDYETRRRYELRLAASDNLKENYTTVIIHVKDVNDNPPVFERPTYRTQITEEDDRNLPKRVLQVTATDGDKDRPQNIVYFLTGQGIDPDNPANSKFDINRTTGEIFVLKPLDRDQPNGRPQWRFTVFAQDEGGEGLVGYADVQVNLKDINDNAPIFPQGVYFGNVTENGTAGMVVMTMTAVDYDDPNEGSNARLVYSIEKNVIEEETGSPIFEIEPDTGVIKTAVCCLDRERTPDYSIQVVAMDGGGLKGTGTASIRVKDINDMPPQFTKDEWFTEVDETDGTALPEMPILTVTVHDEDETNKFQYKVIDNSGYGADKFTMVRNNDGTGSLKIVQPLDYEDQLQSNGFRFRIQVNDKGEDNDNDKYHVAYSWVVVKLRDINDNKPHFERANVEVSVFEDTKVGTELEKFKATDPDQGGKSKVSYSIDRSSDRQRQFAINQNGSVTIQRSLDREVVPRHQVKILAIDDGSPPKTATATLTVIVQDINDNAPKFLKDYRPVLPEHVPPRKVVEILATDDDDRSKSNGPPFQFRLDPSADDIIRASFKVEQDQKGANGDGMAVISSLRSFDREQQKEYMIPIVIKDHGSPAMTGTSTLTVIIGDVNDNKMQPGSKDIFVYNYQGQSPDTPIGRVYVYDLDDWDLPDKKFYWEAMEHPRFKLDEDSGMVTMRAGTREGRYHLRFKVYDRKHTQTDIPANVTVTVREIPHEAVVNSGSVRLSGISDEDFIRVWNYRTQSMSRSKMDRFRDKLADLLNTERENVDIFSVQLKRKHPPLTDVRFSAHGSPYYKPVRLNGIVLMHREEIEKDVGINITMVGIDECLYENQMCEGSCTNSLEISPLPYMVNANKTALVGVRVDTIADCTCGARNFTKPESCRTTPCHNGGRCVDTRFGPHCSCPVGYTGPRCQQTTRSFRGNGWAWYPPLEMCDESHLSLEFITRKPDGLIIYNGPIVPPERDETLISDFIALELERGYPRLLIDFGSGTLELRVKTKKTLDDGEWHRIDLFWDTESIRMVVDFCKSAEIAEMEDGTPPEFDDMSCQARGQIPPFNEYLNVNAPLQVGGLYREQFDQSLYFWHYMPTAKGFDGCIRNLVHNSKLYDLAHPGLSRNSVAGCPQTEEVCAQTETTARCWEHGNCVGSLSEARCHCRPGWTGPACNIPTIPTTFKAQSYVKYALSFEPDRFSTQVQLRFRTREEYGELFRVSDQHNREYGILEIKDGHLHFRYNLNSLRTEEKDLWLNAIVVNDGQWHVVKVNRYGSAATLELDGGEGRRYNETFEFVGHQWLLVDKQEGVYAGGKAEYTGVRTFEVYADYQKSCLDDIRLEGKHLPLPPAMNGTQWGQATMARNLEKGCPSNKPCSNVICPDPFECVDLWNVYECTCGEGRIMSPDSKGCMDRNECLDMPCMNGATCINLEPRLRYRCICPDGFWGENCELVQEGQTLKLSMGALAAILVCLLIILILVLVFVVYNRRREAHIKYPGPDDDVRENIINYDDEGGGEDDMTAFDITPLQIPIGGPMPPELAPMKMPIMYPVMTLMPGQEPNVGMFIEEHKKRADGDPNAPPFDDLRNYAYEGGGSTAGSLSSLASGTDDEQQEYDYLGAWGPRFDKLANMYGPEAPNPHNTELEL.

The N-terminal stretch at 1–36 (MAARRCLNQLRQRYITNRFNICTCAIFLISLPFILA) is a signal peptide. 2 N-linked (GlcNAc...) asparagine glycosylation sites follow: Asn-97 and Asn-150. In terms of domain architecture, Cadherin 1 spans 181 to 305 (VRENQPAGTR…LDENDNRPIF (125 aa)). N-linked (GlcNAc...) asparagine glycans are attached at residues Asn-325 and Asn-426. Cadherin domains lie at 430–543 (HREK…PPYF), 554–651 (VQLN…APQF), 660–756 (IPEN…APKF), 766–858 (VDED…EPKF), 867–968 (VDEN…KPVF), 978–1078 (VEEG…PPLF), 1087–1183 (VKQD…PPVW), 1193–1299 (VKEN…IPLF), 1307–1414 (VLEG…PPYF), 1423–1514 (VDEN…PPVF), 1523–1630 (ITEE…APIF), 1639–1742 (VTEN…PPQF), 1749–1861 (TEVD…KPHF), 1870–1966 (VFED…APKF), and 1974–2085 (LPEH…QPGS). An N-linked (GlcNAc...) asparagine glycan is attached at Asn-930. The N-linked (GlcNAc...) asparagine glycan is linked to Asn-1266. 11 cysteine pairs are disulfide-bonded: Cys-2346-Cys-2357, Cys-2351-Cys-2366, Cys-2368-Cys-2377, Cys-2559-Cys-2585, Cys-2592-Cys-2607, Cys-2601-Cys-2616, Cys-2618-Cys-2627, Cys-2787-Cys-2822, Cys-2869-Cys-2880, Cys-2874-Cys-2891, and Cys-2893-Cys-2902. The 32-residue stretch at 2346 to 2377 (CRTTPCHNGGRCVDTRFGPHCSCPVGYTGPRC) folds into the EGF-like 1 domain. One can recognise a Laminin G-like 1 domain in the interval 2379–2585 (QTTRSFRGNG…GLSRNSVAGC (207 aa)). In terms of domain architecture, EGF-like 2 spans 2592-2627 (CAQTETTARCWEHGNCVGSLSEARCHCRPGWTGPAC). The region spanning 2631–2822 (TIPTTFKAQS…TMARNLEKGC (192 aa)) is the Laminin G-like 2 domain. The EGF-like 3 domain occupies 2869–2902 (CLDMPCMNGATCINLEPRLRYRCICPDGFWGENC). A helical transmembrane segment spans residues 2917–2937 (ALAAILVCLLIILILVLVFVV). Residues 2938–3097 (YNRRREAHIK…PNPHNTELEL (160 aa)) lie on the Cytoplasmic side of the membrane.

In the embryo, the protein first appears in the mesoderm at stage 9 and is present in the myoblasts and muscle fibers by stage 12 and stage 14, respectively. At stage 12 the protein is also located in the axons of the entire CNS, but not in the glial cells. In third instar larvae protein is expressed in the CNS neuropile, photoreceptor axons and precursors of adult muscles.

The protein resides in the cell membrane. Its function is as follows. Cadherins are calcium-dependent cell adhesion proteins. They preferentially interact with themselves in a homophilic manner in connecting cells; cadherins may thus contribute to the sorting of heterogeneous cell types. May associate with arm neural isoform and participate in the transmission of developmental information. In Drosophila melanogaster (Fruit fly), this protein is Neural-cadherin (CadN).